The following is a 401-amino-acid chain: Argininosuccinate synthase (401 aa).

Residues 10–18 (AYSGGVDTS) and Ala38 each bind ATP. Tyr89 contacts L-citrulline. Gly119 provides a ligand contact to ATP. L-aspartate is bound by residues Thr121, Asn125, and Asp126. Asn125 is a binding site for L-citrulline. Residues Arg129, Ser177, Ser186, Glu262, and Tyr274 each contribute to the L-citrulline site.

Belongs to the argininosuccinate synthase family. Type 1 subfamily. Homotetramer.

The protein resides in the cytoplasm. It carries out the reaction L-citrulline + L-aspartate + ATP = 2-(N(omega)-L-arginino)succinate + AMP + diphosphate + H(+). It participates in amino-acid biosynthesis; L-arginine biosynthesis; L-arginine from L-ornithine and carbamoyl phosphate: step 2/3. The sequence is that of Argininosuccinate synthase from Synechococcus sp. (strain WH7803).